The following is a 252-amino-acid chain: 4-formylbenzenesulfonate dehydrogenase TsaC1/TsaC2 (252 aa).

Residues 9-36 (IVTG…LVAD) and Asp-62 each bind NAD(+). Ser-142 provides a ligand contact to substrate. The active-site Proton acceptor is the Tyr-155. Lys-159 is an NAD(+) binding site.

Belongs to the short-chain dehydrogenases/reductases (SDR) family. As to quaternary structure, homodimer.

It carries out the reaction 4-formylbenzenesulfonate + NAD(+) + H2O = 4-sulfobenzoate + NADH + 2 H(+). Involved in the toluene-4-sulfonate degradation pathway. Does not discriminate between the sulfonate and the carboxyl substituents and can also be involved in the p-toluenecarboxylate degradation pathway. In Comamonas testosteroni (Pseudomonas testosteroni), this protein is 4-formylbenzenesulfonate dehydrogenase TsaC1/TsaC2 (tsaC1).